A 389-amino-acid chain; its full sequence is MASSLKKLITSFLLFFFYTIIVASSEPSCRRYKSIISFGDSIADTGNYLHLSDVNHPPQAAFLPYGETFFSVPTGRDSDGRLIIDFIAEFLGLPYVPPYFGSQNVSFEQGVNFAVYGATALDRAFFIEKGIVSDFTNVSLSVQLNTFKQILPTLCASSSRDCREMLGDSLILMGESGGNDYNYPFFEDKSINEIKELTPLIIKAISDAIVDLIDLGGKTFLVPGSFPVGCSAAYLTLFQTAKEKDYDPLTGCLPWLNDFGKHHDEQLKTEIRRLRKLYPHVNIMYADYYNSLYRLYQKPTKYGFKNRPLAACCGVGGQYNFTIGEECGYEGVGYCQNPSEYINWDGYHITEAAHQKMAHGILNGPYATPAFNWSCLDAASVDNESSFGS.

An N-terminal signal peptide occupies residues 1–25 (MASSLKKLITSFLLFFFYTIIVASS). The active-site Nucleophile is the Ser41. 3 N-linked (GlcNAc...) asparagine glycosylation sites follow: Asn104, Asn137, and Asn320. Active-site residues include Asp345 and His348. Asn372 and Asn383 each carry an N-linked (GlcNAc...) asparagine glycan.

It belongs to the 'GDSL' lipolytic enzyme family. As to expression, expressed in most tissues or organs of the mature seedlings. Not expressed in roots of mature seedlings.

It is found in the secreted. It catalyses the reaction O-sinapoylcholine + H2O = (E)-sinapate + choline + H(+). With respect to regulation, inhibited by PMSF. Sinapine esterase that catalyzes that hydrolysis of sinapine, releasing choline and sinapate. Sinapine (O-sinapoylcholine) is the predominant phenolic compound in a complex group of sinapate esters in seeds of oilseed rape (B.napus). Sinapine has antinutritive activity and prevents the use of seed protein for food and feed. Shows broad substrate specificity towards various other choline esters, including phosphatidylcholine. In Brassica napus (Rape), this protein is Sinapine esterase.